A 417-amino-acid chain; its full sequence is NADH-quinone oxidoreductase subunit D 2 (417 aa).

It belongs to the complex I 49 kDa subunit family. In terms of assembly, NDH-1 is composed of 14 different subunits. Subunits NuoB, C, D, E, F, and G constitute the peripheral sector of the complex.

It is found in the cell membrane. It catalyses the reaction a quinone + NADH + 5 H(+)(in) = a quinol + NAD(+) + 4 H(+)(out). Functionally, NDH-1 shuttles electrons from NADH, via FMN and iron-sulfur (Fe-S) centers, to quinones in the respiratory chain. The immediate electron acceptor for the enzyme in this species is believed to be ubiquinone. Couples the redox reaction to proton translocation (for every two electrons transferred, four hydrogen ions are translocated across the cytoplasmic membrane), and thus conserves the redox energy in a proton gradient. This is NADH-quinone oxidoreductase subunit D 2 from Roseiflexus sp. (strain RS-1).